The sequence spans 386 residues: Demethylsterigmatocystin 6-O-methyltransferase (386 aa).

137 to 150 (FDISGPCTQILPDF) is a substrate binding site. Positions 177-197 (MFEWMPQHPKHMESLGHLMAL) are substrate binding. S-adenosyl-L-methionine-binding positions include 228-229 (GG), D253, 273-274 (NF), and R289. Catalysis depends on H293, which acts as the Proton acceptor.

It belongs to the class I-like SAM-binding methyltransferase superfamily. Cation-independent O-methyltransferase family. COMT subfamily.

It carries out the reaction 6-demethylsterigmatocystin + S-adenosyl-L-methionine = sterigmatocystin + S-adenosyl-L-homocysteine + H(+). It participates in mycotoxin biosynthesis; aflatoxin biosynthesis. In terms of biological role, catalyzes both the conversion of demethylsterigmatocystin (DMST) to sterigmatocystin and the conversion of dihydrodemethylsterigmatocystin to dihydrosterigmatocystin (DHDMST) during aflatoxin biosynthesis. This Aspergillus flavus (strain ATCC 200026 / FGSC A1120 / IAM 13836 / NRRL 3357 / JCM 12722 / SRRC 167) protein is Demethylsterigmatocystin 6-O-methyltransferase (omtB).